A 288-amino-acid polypeptide reads, in one-letter code: Small ribosomal subunit protein uS15m (288 aa).

The transit peptide at M1 to K50 directs the protein to the mitochondrion.

The protein belongs to the universal ribosomal protein uS15 family. As to quaternary structure, component of the mitochondrial small ribosomal subunit (mt-SSU). Mature yeast 74S mitochondrial ribosomes consist of a small (37S) and a large (54S) subunit. The 37S small subunit contains a 15S ribosomal RNA (15S mt-rRNA) and at least 32 different proteins. The 54S large subunit contains a 21S rRNA (21S mt-rRNA) and at least 45 different proteins.

Its subcellular location is the mitochondrion. Functionally, component of the mitochondrial ribosome (mitoribosome), a dedicated translation machinery responsible for the synthesis of mitochondrial genome-encoded proteins, including at least some of the essential transmembrane subunits of the mitochondrial respiratory chain. The mitoribosomes are attached to the mitochondrial inner membrane and translation products are cotranslationally integrated into the membrane. The chain is Small ribosomal subunit protein uS15m (mrps28) from Schizosaccharomyces pombe (strain 972 / ATCC 24843) (Fission yeast).